A 130-amino-acid polypeptide reads, in one-letter code: Small ribosomal subunit protein uS9 (130 aa).

Belongs to the universal ribosomal protein uS9 family.

This Paraburkholderia phymatum (strain DSM 17167 / CIP 108236 / LMG 21445 / STM815) (Burkholderia phymatum) protein is Small ribosomal subunit protein uS9.